Consider the following 571-residue polypeptide: Isocitrate dehydrogenase kinase/phosphatase (571 aa).

ATP-binding positions include 318-324 (APGVRGM) and Lys-339. Asp-374 is an active-site residue.

Belongs to the AceK family.

The protein resides in the cytoplasm. It catalyses the reaction L-seryl-[isocitrate dehydrogenase] + ATP = O-phospho-L-seryl-[isocitrate dehydrogenase] + ADP + H(+). In terms of biological role, bifunctional enzyme which can phosphorylate or dephosphorylate isocitrate dehydrogenase (IDH) on a specific serine residue. This is a regulatory mechanism which enables bacteria to bypass the Krebs cycle via the glyoxylate shunt in response to the source of carbon. When bacteria are grown on glucose, IDH is fully active and unphosphorylated, but when grown on acetate or ethanol, the activity of IDH declines drastically concomitant with its phosphorylation. This chain is Isocitrate dehydrogenase kinase/phosphatase, found in Pseudomonas entomophila (strain L48).